Reading from the N-terminus, the 319-residue chain is uncharacterized protein (319 aa).

The N-terminal stretch at 1–23 (MFPFRRNVLAFAALLALSSPVLA) is a signal peptide.

The protein to H.influenzae HI_0755.

This is an uncharacterized protein from Escherichia coli (strain K12).